The following is a 337-amino-acid chain: 2-oxoglutarate receptor 1 (337 aa).

Topologically, residues 1 to 38 (MIEPLDSPASDSDFLDYPSALGNCTDEQISFKMQYLPV) are extracellular. Asn23 is a glycosylation site (N-linked (GlcNAc...) asparagine). Residues 39–59 (IYSIIFLVGFPGNTVAISIYI) form a helical membrane-spanning segment. Residues 60–69 (FKMRPWRGST) are Cytoplasmic-facing. The helical transmembrane segment at 70 to 90 (VIMLNLALTDLLYLTSLPFLI) threads the bilayer. Over 91–116 (HYYASGENWIFGDFMCKFIRFGFHFN) the chain is Extracellular. Residues Cys106 and Cys183 are joined by a disulfide bond. The chain crosses the membrane as a helical span at residues 117–137 (LYSSILFLTCFSLFRYVVIIH). Residues 138–151 (PMSCFSIQKTRWAV) lie on the Cytoplasmic side of the membrane. A helical membrane pass occupies residues 152–172 (VACAGVWVISLVAVMPMTFLI). The Extracellular portion of the chain corresponds to 173–200 (TSTTRTNRSACLDLTSSDDLTTIKWYNL). A helical membrane pass occupies residues 201-221 (ILTATTFCLPLVIVTLCYTTI). The Cytoplasmic segment spans residues 222-242 (ISTLTHGPRTHSCFKQKARRL). A helical membrane pass occupies residues 243–263 (TILLLLVFYICFLPFHILRVI). The Extracellular segment spans residues 264-284 (RIESRLLSISCSIESHIHEAY). The chain crosses the membrane as a helical span at residues 285–305 (IVSRPLAALNTFGNLLLYVVV). The Cytoplasmic segment spans residues 306–337 (SNNFQQAFCSIVRCKASGDLEQGKKDSCSNNP).

It belongs to the G-protein coupled receptor 1 family. In terms of tissue distribution, predominantly expressed in the kidney with limited expression in the testis and the smooth muscle. Expressed in SLC26A4/pendrin-positive type B and non-A non-B intercalated cells (at protein level).

The protein localises to the cell membrane. G protein-coupled receptor for dicarboxylates and amino dicarboxylates. Receptor for itaconate produced by activated macrophages upon bacterial infection. In the respiratory epithelium, couples the binding of itaconate to the activation of GNA11 and downstream intracellular Ca(2+) release, leading to mucocilliary clearance of airborne pathogens. Receptor for leukotriene E4 (LTE4) produced by mast cells upon allergic inflammation. Binds with high affinity to LTE4 and elicits mucin release from pulmonary epithelium in response to airborne fungi allergens. Regulates mucin-producing goblet cell homeostasis. Receptor for alpha-ketoglutarate produced by proximal tubule renal cells upon metabolic alkalosis. In an intrarenal paracrine signaling pathway, binds alpha-ketoglutarate and drives transepithelial salt reabsorption and bicarbonate secretion by SLC26A4/pendrin-positive intercalated cells. In Mus musculus (Mouse), this protein is 2-oxoglutarate receptor 1 (Oxgr1).